Here is a 612-residue protein sequence, read N- to C-terminus: Cytoplasmic dynein 1 intermediate chain 2 (612 aa).

Basic and acidic residues-rich tracts occupy residues 1–13 (MSDK…ELER) and 20–43 (QIRE…KKEA). The interval 1–188 (MSDKSDLKAE…PHELTEEEKQ (188 aa)) is disordered. Position 2 is an N-acetylserine (Ser-2). Ser-51 is modified (diphosphoserine). Residues Ser-51 and Ser-84 each carry the phosphoserine modification. Over residues 82-91 (PSSKSVSTPS) the composition is skewed to low complexity. Residue Thr-89 is modified to Phosphothreonine. Ser-91, Ser-95, and Ser-98 each carry phosphoserine. Residues 164–188 (EKTLKKDEENDSKAPPHELTEEEKQ) are compositionally biased toward basic and acidic residues. 7 WD repeats span residues 251 to 300 (SKHR…TTPE), 304 to 344 (HCQS…RTPV), 353 to 394 (AHTH…HPQD), 403 to 443 (SKAV…AGIS), 448 to 493 (GHQG…PLYS), 496 to 536 (DNSD…EVPT), and 542 to 581 (EGNP…AVPR).

Belongs to the dynein intermediate chain family. In terms of assembly, homodimer. The cytoplasmic dynein 1 complex consists of two catalytic heavy chains (HCs) and a number of non-catalytic subunits presented by intermediate chains (ICs), light intermediate chains (LICs) and light chains (LCs); the composition seems to vary in respect to the IC, LIC and LC composition. The heavy chain homodimer serves as a scaffold for the probable homodimeric assembly of the respective non-catalytic subunits. The ICs and LICs bind directly to the HC dimer and the LCs assemble on the IC dimer. Interacts with DYNLT3. Interacts with DYNLT1. Interacts (dephosphorylated at Ser-84) with DCTN1. Interacts with BICD2. Interacts with SPEF2. Interacts with CFAP61. The phosphorylation status of Ser-84 appears to be involved in dynactin-dependent target binding. Post-translationally, pyrophosphorylation by 5-diphosphoinositol pentakisphosphate (5-IP7) promotes interaction with DCTN1. Serine pyrophosphorylation is achieved by Mg(2+)-dependent, but enzyme independent transfer of a beta-phosphate from a inositol pyrophosphate to a pre-phosphorylated serine residue.

The protein resides in the cytoplasm. It localises to the cytoskeleton. Acts as one of several non-catalytic accessory components of the cytoplasmic dynein 1 complex that are thought to be involved in linking dynein to cargos and to adapter proteins that regulate dynein function. Cytoplasmic dynein 1 acts as a motor for the intracellular retrograde motility of vesicles and organelles along microtubules. The intermediate chains mediate the binding of dynein to dynactin via its 150 kDa component (p150-glued) DCTN1. Involved in membrane-transport, such as Golgi apparatus, late endosomes and lysosomes. This chain is Cytoplasmic dynein 1 intermediate chain 2 (Dync1i2), found in Mus musculus (Mouse).